Reading from the N-terminus, the 353-residue chain is MKIIKAVPEEFLNGLYLIPTDRGNLLELDENGNFEVVNNIAIIRVLATPNLKKAIAKIVYQIKDKYYLFKNHKKANWLKNLLEYMNNKIEFDKYYRAKKAWYRGIGDLFRNIRKWEFEKVVGKIISLLKVLNPIVVFDVHDIRKWHYRKSFINFVKELRKNSISVVIRYPIDCHEEIREIFPEGILNTKATIRYFAKVHGYYISDRVAEYLLKITNGNLETIYLILRHSKREIKNLRELKIPWLRILPYIVDSKYRKLVEVIIELRKFKVEDITYKVNYKLSTIYRYLDELVELGILTKIKHKGKVRFKIRLNRNILLTLLKKSKNNYLHWFSIFLLDSIPWDIQIFEFSKSI.

This is an uncharacterized protein from Methanocaldococcus jannaschii (strain ATCC 43067 / DSM 2661 / JAL-1 / JCM 10045 / NBRC 100440) (Methanococcus jannaschii).